The primary structure comprises 290 residues: Agmatinase (290 aa).

Residues His-112, Asp-135, His-137, Asp-139, Asp-216, and Asp-218 each coordinate Mn(2+).

Belongs to the arginase family. Agmatinase subfamily. It depends on Mn(2+) as a cofactor.

The catalysed reaction is agmatine + H2O = urea + putrescine. It participates in amine and polyamine biosynthesis; putrescine biosynthesis via agmatine pathway; putrescine from agmatine: step 1/1. Catalyzes the formation of putrescine from agmatine. The polypeptide is Agmatinase (speB) (Bacillus subtilis (strain 168)).